The sequence spans 351 residues: MKIAIINMGNNVINFKTVPSSETIYLFKVISEMGLNVDIISLKNGVYTKSFDEVDVNDYDRLIVVNSSINFFGGKPNLAILSAQKFMAKYKSKIYYLFTDIRLPFSQSWPNVKNRPWAYLYTEEELLIKSPIKVISQGINLDIAKAAHKKVDNVIEFEYFPIEQYKIHMNDFQLSKPTKKTLDVIYGGSFRSGQRESKMVEFLFDTGLNIEFFGNAREKQFKNPKYPWTKAPVFTGKIPMNMVSEKNSQAIAALIIGDKNYNDNFITLRVWETMASDAVMLIDEEFDTKHRIINDARFYVNNRAELIDRVNELKHSDVLRKEMLSIQHDILNKTRAKKAEWQDAFKKAIDL.

In terms of assembly, monomer.

It carries out the reaction Transfers a beta-D-glucosyl residue from UDP-alpha-D-glucose to a hydroxymethylcytosine residue in DNA.. The protein operates within genetic information processing; DNA modification. In terms of biological role, catalyzes the transfer of glucose from uridine diphosphoglucose to 5-hydroxymethyl cytosine of T4 DNA to yield glucosyl 5-hydroxymethyl cytosine (glc-HMC). This DNA process seems to occur immediately after DNA synthesis since the DNA alpha-glucosyltransferase interacts with the clamp protein gp45. The glc-HMC modification protects the phage genome against its own nucleases and the host restriction endonuclease system. The glc-HMC modification also protects against the host CRISPR-Cas9 defense system. This chain is DNA beta-glucosyltransferase (bgt), found in Enterobacteria phage T4 (Bacteriophage T4).